We begin with the raw amino-acid sequence, 472 residues long: MRRLNGVDALMLYLDGGSAYNHTLKISVLDPSTDPDGWSWPKARQMFEERAHLLPVFRLRYLPTPLGLHHPIWVEDPEFDLDAHVRRVVCPAPGGMAEFCALVEQIYAHPLDRDRPLWQTWVVEGLDGGRVALVTLLHHAYSDGVGVLDMLAAFYNDTPDEAPVVAPPWEPPPLPSTRQRLGWALRDLPSRLGKIAPTVRAVRDRVRIEREFAKDGDRRVPPTFDRSAPPGPFQRGLSRSRRFSCESFPLAEVREVSKTLGVTINDVFLACVAGAVRRYLERCGSPPTDAMVATMPLAVTPAAERAHPGNYSSVDYVWLRADIADPLERLHATHLAAEATKQHFAQTKDADVGAVVELLPERLISGLARANARTKGRFDTFKNVVVSNVPGPREPRYLGRWRVDQWFSTGQISHGATLNMTVWSYCDQFNLCVMADAVAVRNTWELLGGFRASHEELLAAARAQATPKEMAT.

The active-site Proton acceptor is His-139. The disordered stretch occupies residues 217–238 (DRRVPPTFDRSAPPGPFQRGLS).

This sequence belongs to the long-chain O-acyltransferase family.

It carries out the reaction an acyl-CoA + a 1,2-diacyl-sn-glycerol = a triacyl-sn-glycerol + CoA. Its pathway is glycerolipid metabolism; triacylglycerol biosynthesis. In Mycobacterium tuberculosis (strain CDC 1551 / Oshkosh), this protein is Putative diacyglycerol O-acyltransferase MT3172.